A 340-amino-acid polypeptide reads, in one-letter code: Uroporphyrinogen decarboxylase (340 aa).

Substrate contacts are provided by residues 21 to 25 (RQAGR), Phe40, Asp71, Tyr148, Ser203, and His316.

This sequence belongs to the uroporphyrinogen decarboxylase family. In terms of assembly, homodimer.

The protein resides in the cytoplasm. The enzyme catalyses uroporphyrinogen III + 4 H(+) = coproporphyrinogen III + 4 CO2. The protein operates within porphyrin-containing compound metabolism; protoporphyrin-IX biosynthesis; coproporphyrinogen-III from 5-aminolevulinate: step 4/4. Functionally, catalyzes the decarboxylation of four acetate groups of uroporphyrinogen-III to yield coproporphyrinogen-III. In Campylobacter jejuni subsp. jejuni serotype O:2 (strain ATCC 700819 / NCTC 11168), this protein is Uroporphyrinogen decarboxylase.